Reading from the N-terminus, the 121-residue chain is Small ribosomal subunit protein uS13 (121 aa).

The tract at residues 91–121 is disordered; the sequence is HRRGLPVRGQNSKNNARTRKGPRRTVANKKK. Positions 106-121 are enriched in basic residues; sequence ARTRKGPRRTVANKKK.

It belongs to the universal ribosomal protein uS13 family. In terms of assembly, part of the 30S ribosomal subunit. Forms a loose heterodimer with protein S19. Forms two bridges to the 50S subunit in the 70S ribosome.

Functionally, located at the top of the head of the 30S subunit, it contacts several helices of the 16S rRNA. In the 70S ribosome it contacts the 23S rRNA (bridge B1a) and protein L5 of the 50S subunit (bridge B1b), connecting the 2 subunits; these bridges are implicated in subunit movement. Contacts the tRNAs in the A and P-sites. This is Small ribosomal subunit protein uS13 from Bacillus cereus (strain ZK / E33L).